The following is a 382-amino-acid chain: Sad1-interacting factor 2 (382 aa).

Residue Ser135 is modified to Phosphoserine. The helical transmembrane segment at Glu356 to Val376 threads the bilayer.

This sequence belongs to the RMD1/sif2 family. In terms of assembly, interacts with sad1.

Its subcellular location is the nucleus membrane. Functionally, required for sporulation where it is believed to have a role in meiotic nuclear division. The sequence is that of Sad1-interacting factor 2 (sif2) from Schizosaccharomyces pombe (strain 972 / ATCC 24843) (Fission yeast).